The sequence spans 836 residues: Pentatricopeptide repeat-containing protein At1g79490, mitochondrial (836 aa).

The N-terminal 85 residues, 1-85, are a transit peptide targeting the mitochondrion; sequence MIRGRTAKVI…QCRSIVRRFC (85 aa). 12 PPR repeats span residues 204–238, 242–276, 277–311, 312–346, 347–381, 382–416, 417–451, 452–486, 487–521, 528–555, 556–590, and 591–625; these read SDEC…SSSH, SFNA…GCKI, DTQT…DSLL, DGST…KLRP, SFSV…GHRP, SATM…GFRP, NFGL…GFLP, TPST…GLRP, GLSS…GYSV, VLMI…GIKT, NNFI…AGKV, and DLVL…KHKA. One can recognise a Smr domain in the interval 710 to 786; it reads LDVRNLSVGA…APGELVMEWF (77 aa).

Belongs to the PPR family. P subfamily.

It is found in the mitochondrion. The polypeptide is Pentatricopeptide repeat-containing protein At1g79490, mitochondrial (EMB2217) (Arabidopsis thaliana (Mouse-ear cress)).